A 149-amino-acid chain; its full sequence is UPF0756 membrane protein MS1439 (149 aa).

The next 4 helical transmembrane spans lie at 10-32, 56-76, 82-102, and 126-146; these read IMLVVLILLGVLSNNNSITISAL, VGIIILTVGVLAPLVSGKVQL, FLNWQMFLSIVIGIAVAWFAG, and VAFLGGIPVGPLIAAGILAVI.

It belongs to the UPF0756 family.

It is found in the cell membrane. The chain is UPF0756 membrane protein MS1439 from Mannheimia succiniciproducens (strain KCTC 0769BP / MBEL55E).